We begin with the raw amino-acid sequence, 401 residues long: Beta-ketoadipyl-CoA thiolase (401 aa).

Cys-91 serves as the catalytic Acyl-thioester intermediate. Residues His-357 and Cys-387 each act as proton acceptor in the active site.

The protein belongs to the thiolase-like superfamily. Thiolase family.

The catalysed reaction is succinyl-CoA + acetyl-CoA = 3-oxoadipyl-CoA + CoA. The protein operates within aromatic compound metabolism; beta-ketoadipate pathway; acetyl-CoA and succinyl-CoA from 3-oxoadipate: step 2/2. Its function is as follows. Catalyzes thiolytic cleavage of beta-ketoadipyl-CoA to succinyl-CoA and acetyl-CoA. The sequence is that of Beta-ketoadipyl-CoA thiolase (pcaF) from Pseudomonas aeruginosa (strain ATCC 15692 / DSM 22644 / CIP 104116 / JCM 14847 / LMG 12228 / 1C / PRS 101 / PAO1).